The chain runs to 351 residues: L-threonine 3-dehydrogenase (351 aa).

Cys-39 is a Zn(2+) binding site. Residues Thr-41 and His-44 each act as charge relay system in the active site. Zn(2+) contacts are provided by His-64, Glu-65, Cys-94, Cys-97, Cys-100, and Cys-108. NAD(+) is bound by residues Ile-176, Asp-196, Arg-201, 271–273 (LGI), and 295–296 (IY).

It belongs to the zinc-containing alcohol dehydrogenase family. In terms of assembly, homotetramer. Requires Zn(2+) as cofactor.

The protein localises to the cytoplasm. It catalyses the reaction L-threonine + NAD(+) = (2S)-2-amino-3-oxobutanoate + NADH + H(+). The protein operates within amino-acid degradation; L-threonine degradation via oxydo-reductase pathway; glycine from L-threonine: step 1/2. Its function is as follows. Catalyzes the NAD(+)-dependent oxidation of L-threonine to 2-amino-3-ketobutyrate. The chain is L-threonine 3-dehydrogenase from Francisella tularensis subsp. mediasiatica (strain FSC147).